Reading from the N-terminus, the 452-residue chain is UDP-glycosyltransferase 79B11 (452 aa).

UDP-alpha-D-glucose contacts are provided by residues Ser260, 319 to 325 (VQQPSWQ), 340 to 348 (HCGFGSMWE), and 362 to 365 (LNDQ).

This sequence belongs to the UDP-glycosyltransferase family.

In Arabidopsis thaliana (Mouse-ear cress), this protein is UDP-glycosyltransferase 79B11 (UGT79B11).